We begin with the raw amino-acid sequence, 544 residues long: Tyrosine-protein kinase Yes (544 aa).

G2 carries N-myristoyl glycine lipidation. The SH3 domain maps to 92–153 (GGVTFFVALY…PSNYVAPADS (62 aa)). Positions 159-256 (WYFGKLSRKD…GLCYKLTTVC (98 aa)) constitute an SH2 domain. In terms of domain architecture, Protein kinase spans 278-531 (LRLDVRLGQG…YIQSFLEDYF (254 aa)). ATP-binding positions include 284–292 (LGQGCFGEV) and K306. The Proton acceptor role is filled by D397. Y427 is modified (phosphotyrosine; by autocatalysis).

It belongs to the protein kinase superfamily. Tyr protein kinase family. SRC subfamily.

It carries out the reaction L-tyrosyl-[protein] + ATP = O-phospho-L-tyrosyl-[protein] + ADP + H(+). This Xiphophorus hellerii (Green swordtail) protein is Tyrosine-protein kinase Yes (yes).